We begin with the raw amino-acid sequence, 78 residues long: Large ribosomal subunit protein bL28 (78 aa).

Positions 1-20 are disordered; that stretch reads MSRVCQVTGKGPVTGNNISH.

The protein belongs to the bacterial ribosomal protein bL28 family.

The chain is Large ribosomal subunit protein bL28 from Stutzerimonas stutzeri (strain A1501) (Pseudomonas stutzeri).